The sequence spans 238 residues: Ribonuclease PH (238 aa).

Phosphate contacts are provided by residues Arg86 and 124–126; that span reads GTR.

This sequence belongs to the RNase PH family. As to quaternary structure, homohexameric ring arranged as a trimer of dimers.

It catalyses the reaction tRNA(n+1) + phosphate = tRNA(n) + a ribonucleoside 5'-diphosphate. In terms of biological role, phosphorolytic 3'-5' exoribonuclease that plays an important role in tRNA 3'-end maturation. Removes nucleotide residues following the 3'-CCA terminus of tRNAs; can also add nucleotides to the ends of RNA molecules by using nucleoside diphosphates as substrates, but this may not be physiologically important. Probably plays a role in initiation of 16S rRNA degradation (leading to ribosome degradation) during starvation. The protein is Ribonuclease PH of Salmonella gallinarum (strain 287/91 / NCTC 13346).